Here is a 397-residue protein sequence, read N- to C-terminus: MSLRSCSTEMIPEFTVTEITDLVRQVMHDTFYCIKIRGEISGLSRPSSGHVYLSLKDDNSVISAVCWHGTRLDVQFENGLEVICTGHISTYQSRYQLVIEGMVLAGQGKLAAMLEERRKKLEKEGLFDQARKKPLPLLPLKIGVITSPTGAVIRDILNRVKHRFPSHIIVWPVQVQGSQASAMVVQAILGFNNLEEPPDVIIVARGGGSIEDLWPFNDEELARTAAASKIPIVSAIGHETDFTIIDYAADVRAPTPTAAVEIVLPERQQLVSDIAHKLSKIRSAVRNVLGAKEHRLLQLYGVLTETKHKISEVGRSALAHQEKIEFLFKVALLKKQQYLDNLIGRIDRYNKEHIISVGYAVIYDNTGQHVSSANAVAPDDTIVIEWKDGKRRAAILT.

This sequence belongs to the XseA family. In terms of assembly, heterooligomer composed of large and small subunits.

It is found in the cytoplasm. The catalysed reaction is Exonucleolytic cleavage in either 5'- to 3'- or 3'- to 5'-direction to yield nucleoside 5'-phosphates.. Bidirectionally degrades single-stranded DNA into large acid-insoluble oligonucleotides, which are then degraded further into small acid-soluble oligonucleotides. The protein is Exodeoxyribonuclease 7 large subunit of Anaplasma marginale (strain Florida).